The sequence spans 273 residues: Suppressor protein STM1 (273 aa).

Residues methionine 1–aspartate 153 form a disordered region. At serine 2 the chain carries N-acetylserine. Residues serine 32, serine 41, and serine 45 each carry the phosphoserine; by MTOR modification. A Glycyl lysine isopeptide (Lys-Gly) (interchain with G-Cter in ubiquitin) cross-link involves residue lysine 46. 2 positions are modified to phosphoserine; by MTOR: serine 55 and serine 73. Position 55 is a phosphoserine (serine 55). 3 stretches are compositionally biased toward basic and acidic residues: residues alanine 60–threonine 77, arginine 89–lysine 104, and glycine 111–glutamine 124. Residue serine 118 is modified to Phosphoserine. Residues lysine 121 and lysine 171 each participate in a glycyl lysine isopeptide (Lys-Gly) (interchain with G-Cter in ubiquitin) cross-link. Threonine 181 is subject to Phosphothreonine; by MTOR. Lysine 184 is covalently cross-linked (Glycyl lysine isopeptide (Lys-Gly) (interchain with G-Cter in ubiquitin)). Position 218 is a phosphothreonine; by MTOR (threonine 218). The disordered stretch occupies residues arginine 219–alanine 273. 2 stretches are compositionally biased toward low complexity: residues aspartate 224 to arginine 236 and lysine 244 to threonine 257. Serine 229 carries the post-translational modification Phosphoserine. Polar residues predominate over residues valine 258–alanine 273.

This sequence belongs to the SERBP1-HABP4 family. Associates with mature 80S ribosomes. Binds to the head domain of the 40S ribosomal subunit and prevents mRNA binding by inserting its alpha-helix domain towards the mRNA entry tunnel at the decoding site, where it blocks the binding of tRNA and mRNA at the A- and P-sites. Interacts with EFT1; interaction sequesters EFT1 at the A-site of the ribosome, thereby blocking the interaction sites of the mRNA-tRNA complex, promoting ribosome stabilization and hibernation. Interacts with CDC13. Associates with the telomere-proximal Y' element. Phosphorylation by TORC1 upon nutrient replenishment inhibits STM1 and causes its release from dormant ribosomes.

It localises to the cytoplasm. The protein resides in the nucleus. It is found in the perinuclear region. Ribosome preservation factor that protect a small pool of nontranslating, vacant ribosomes in cells under nutrient starvation conditions. Under nutrient-limiting conditions, cells reduce ribosome biogenesis and degrade ribosomes via autophagy (ribophagy) or proteasomal degradation. To avoid excessive degradation during starvation, STM1 binds to and protects 80S ribosomes from proteasomal degradation. Under nutrient-sufficient conditions, TORC1 phosphorylates and inhibits STM1 to prevent formation of dormant 80S ribosomes. Acts as an inhibitor of mRNA translation by promoting ribosome hibernation: clamps the two ribosomal subunits, thereby preventing their dissociation, and inhibits translation by excluding mRNA-binding. Acts via its association with eEF2 (EFT1), promoting ribosome stabilization and storage in an inactive state. May also repress translation by preventing association of eEF3 (YEF3 and HEF3) with ribosomes. Binds specifically G4 quadruplex (these are four-stranded right-handed helices, stabilized by guanine base quartets) and purine motif triplex (characterized by a third, antiparallel purine-rich DNA strand located within the major groove of a homopurine stretch of duplex DNA) nucleic acid structures. These structures may be present at telomeres or in rRNAs. Acts with CDC13 to control telomere length homeostasis. Involved in the control of the apoptosis-like cell death. This chain is Suppressor protein STM1, found in Saccharomyces cerevisiae (strain ATCC 204508 / S288c) (Baker's yeast).